Consider the following 391-residue polypeptide: 3-ketoacyl-CoA thiolase (391 aa).

The Acyl-thioester intermediate role is filled by Cys95. Catalysis depends on proton acceptor residues His347 and Cys377.

The protein belongs to the thiolase-like superfamily. Thiolase family. In terms of assembly, heterotetramer of two alpha chains (FadB) and two beta chains (FadA).

Its subcellular location is the cytoplasm. It catalyses the reaction an acyl-CoA + acetyl-CoA = a 3-oxoacyl-CoA + CoA. It functions in the pathway lipid metabolism; fatty acid beta-oxidation. In terms of biological role, catalyzes the final step of fatty acid oxidation in which acetyl-CoA is released and the CoA ester of a fatty acid two carbons shorter is formed. This chain is 3-ketoacyl-CoA thiolase, found in Pseudomonas savastanoi pv. phaseolicola (strain 1448A / Race 6) (Pseudomonas syringae pv. phaseolicola (strain 1448A / Race 6)).